Consider the following 248-residue polypeptide: 3-deoxy-manno-octulosonate cytidylyltransferase (248 aa).

Belongs to the KdsB family.

Its subcellular location is the cytoplasm. The catalysed reaction is 3-deoxy-alpha-D-manno-oct-2-ulosonate + CTP = CMP-3-deoxy-beta-D-manno-octulosonate + diphosphate. It functions in the pathway nucleotide-sugar biosynthesis; CMP-3-deoxy-D-manno-octulosonate biosynthesis; CMP-3-deoxy-D-manno-octulosonate from 3-deoxy-D-manno-octulosonate and CTP: step 1/1. Its pathway is bacterial outer membrane biogenesis; lipopolysaccharide biosynthesis. In terms of biological role, activates KDO (a required 8-carbon sugar) for incorporation into bacterial lipopolysaccharide in Gram-negative bacteria. In Cronobacter sakazakii (strain ATCC BAA-894) (Enterobacter sakazakii), this protein is 3-deoxy-manno-octulosonate cytidylyltransferase.